Reading from the N-terminus, the 176-residue chain is RNA pyrophosphohydrolase (176 aa).

Residues Gly6–Lys149 enclose the Nudix hydrolase domain. Residues Gly38–Gly59 carry the Nudix box motif.

Belongs to the Nudix hydrolase family. RppH subfamily. A divalent metal cation is required as a cofactor.

Its function is as follows. Accelerates the degradation of transcripts by removing pyrophosphate from the 5'-end of triphosphorylated RNA, leading to a more labile monophosphorylated state that can stimulate subsequent ribonuclease cleavage. The chain is RNA pyrophosphohydrolase from Photorhabdus laumondii subsp. laumondii (strain DSM 15139 / CIP 105565 / TT01) (Photorhabdus luminescens subsp. laumondii).